The primary structure comprises 379 residues: MVTGITTTMSPNVLGTAVVSTQQQQQQQQHKEAPIKSDRRSNKPIMEKRRRARINNCLNELKTLILDATKKDPARHSKLEKADILEKTVKHLQELQRQQAAMQQAADPKIINKFKAGFADCANEVSRFPGLDSTQRRRLLQHLSNCINGVKTELHHQQRQQALAQAQSLHAQVVLPSPPSSPEQEPSVTPVAASGNNNSSSNNTNTTAPYLFGQIQQNANGYFLPNGMQVIPTKLPNGSIALVLPQSLPQQQQQQLLQQHQHHQQQQQLAAAAAAAAAAAAAVAQQHQQSPLLVAMPQRTASTGSASSHSSAGYESAPSSSSSRGSYAPPSPANSAYEPMDVKPSVIQRVPHMHLEQQPLSLVIKKQIKVEEEQPWRPW.

The segment at 20–50 (STQQQQQQQQHKEAPIKSDRRSNKPIMEKRR) is disordered. Over residues 29-47 (QHKEAPIKSDRRSNKPIME) the composition is skewed to basic and acidic residues. Residues 36–55 (KSDRRSNKPIMEKRRRARIN) are interaction with Topors. The bHLH domain occupies 38–95 (DRRSNKPIMEKRRRARINNCLNELKTLILDATKKDPARHSKLEKADILEKTVKHLQEL). An Orange domain is found at 114-143 (FKAGFADCANEVSRFPGLDSTQRRRLLQHL). 2 disordered regions span residues 167 to 208 (QSLH…NTTA) and 298 to 345 (QRTA…VKPS). Composition is skewed to low complexity over residues 182 to 207 (PEQEPSVTPVAASGNNNSSSNNTNTT) and 301 to 328 (ASTGSASSHSSAGYESAPSSSSSRGSYA). A WRPW motif motif is present at residues 376–379 (WRPW).

Transcription repression requires formation of a complex with a corepressor protein (Groucho).

It is found in the nucleus. Pair-rule protein that regulates embryonic segmentation and adult bristle patterning. Transcriptional repressor of genes that require a bHLH protein for their transcription (e.g. ftz). The polypeptide is Protein hairy (Drosophila virilis (Fruit fly)).